The sequence spans 383 residues: Podocin (383 aa).

The span at 1-41 shows a compositional bias: basic and acidic residues; that stretch reads MERRARSSSRESRGRGGRTPHKENKRAKAERSGGGRGRQEA. A disordered region spans residues 1 to 76; it reads MERRARSSSR…VDEVRGSGEE (76 aa). The Cytoplasmic portion of the chain corresponds to 1–102; sequence MERRARSSSR…TKSSGLGACE (102 aa). Cys101 carries S-palmitoyl cysteine lipidation. Residues 103–123 lie within the membrane without spanning it; the sequence is WLLVLISLLFIIMTFPFSIWF. The Cytoplasmic segment spans residues 124–383; sequence CVKVVQEYER…NPKKKDSPML (260 aa). Gln287 is a glycosylation site (N-linked (GlcNAc...) asparagine). Residues 355–383 form a disordered region; the sequence is NRTQGSLPFPSPSKPVEPLNPKKKDSPML. Over residues 374–383 the composition is skewed to basic and acidic residues; that stretch reads NPKKKDSPML.

It belongs to the band 7/mec-2 family. In terms of assembly, interacts with nephrin/NPHS1 and KIRREL1. Interacts directly with CD2AP. Interacts with DDN. Glycosylated. In terms of tissue distribution, almost exclusively expressed in the podocytes of fetal and mature kidney glomeruli.

It is found in the cell membrane. The protein resides in the endoplasmic reticulum. Plays a role in the regulation of glomerular permeability, acting probably as a linker between the plasma membrane and the cytoskeleton. The chain is Podocin (NPHS2) from Homo sapiens (Human).